The chain runs to 266 residues: DLA class II histocompatibility antigen, DR-1 beta chain (266 aa).

Positions 1–29 are cleaved as a signal peptide; the sequence is MVCLCFLGGSWMTALMLILMVLNPPFAWA. Positions 30–124 are beta-1; the sequence is RDTPPHFLEV…IESFTVQRRV (95 aa). Topologically, residues 30–227 are extracellular; the sequence is RDTPPHFLEV…RAQSDSAQSK (198 aa). Disulfide bonds link Cys-44–Cys-108 and Cys-146–Cys-202. N-linked (GlcNAc...) asparagine glycosylation occurs at Asn-48. The interval 125-227 is beta-2; that stretch reads EPTVTVYPTK…RAQSDSAQSK (103 aa). In terms of domain architecture, Ig-like C1-type spans 126-214; that stretch reads PTVTVYPTKT…EHPSLTSPVT (89 aa). The chain crosses the membrane as a helical span at residues 228–250; that stretch reads MLSGIGGFVLGLLFLAVGLFIYF. The Cytoplasmic portion of the chain corresponds to 251-266; it reads RNQKGHSGLQPTGLLS.

The protein belongs to the MHC class II family.

The protein resides in the membrane. The polypeptide is DLA class II histocompatibility antigen, DR-1 beta chain (Canis lupus familiaris (Dog)).